Consider the following 71-residue polypeptide: AGEECDCGSPANPCCDAATCKLRPGAQCADGLCCDQCRFIKKGKICRRARGDNPDDRCTGQSADCPRNRFH.

Residues 1 to 71 (AGEECDCGSP…SADCPRNRFH (71 aa)) enclose the Disintegrin domain. Disulfide bonds link Cys-5-Cys-20, Cys-7-Cys-15, Cys-14-Cys-37, Cys-28-Cys-34, Cys-33-Cys-58, and Cys-46-Cys-65. A Cell attachment site motif is present at residues 50–52 (RGD). The disordered stretch occupies residues 50–71 (RGDNPDDRCTGQSADCPRNRFH).

Belongs to the venom metalloproteinase (M12B) family. P-II subfamily. P-IIa sub-subfamily. Monomer (disintegrin). Expressed by the venom gland.

Its subcellular location is the secreted. In terms of biological role, inhibits fibrinogen interaction with platelets. Acts by binding to alpha-IIb/beta-3 (ITGA2B/ITGB3) on the platelet surface and inhibits aggregation induced by ADP, thrombin, platelet-activating factor and collagen. The sequence is that of Disintegrin viridin from Crotalus viridis viridis (Prairie rattlesnake).